Here is a 338-residue protein sequence, read N- to C-terminus: Lipoate-protein ligase A (338 aa).

A BPL/LPL catalytic domain is found at 29–216 (PATQRVLFLW…AFFAHYGERV (188 aa)). Residues R71, 76 to 79 (GAVF), and K134 contribute to the ATP site. Position 134 (K134) interacts with (R)-lipoate.

This sequence belongs to the LplA family. In terms of assembly, monomer.

The protein localises to the cytoplasm. The catalysed reaction is L-lysyl-[lipoyl-carrier protein] + (R)-lipoate + ATP = N(6)-[(R)-lipoyl]-L-lysyl-[lipoyl-carrier protein] + AMP + diphosphate + H(+). The protein operates within protein modification; protein lipoylation via exogenous pathway; protein N(6)-(lipoyl)lysine from lipoate: step 1/2. It participates in protein modification; protein lipoylation via exogenous pathway; protein N(6)-(lipoyl)lysine from lipoate: step 2/2. In terms of biological role, catalyzes both the ATP-dependent activation of exogenously supplied lipoate to lipoyl-AMP and the transfer of the activated lipoyl onto the lipoyl domains of lipoate-dependent enzymes. The polypeptide is Lipoate-protein ligase A (Salmonella typhimurium (strain LT2 / SGSC1412 / ATCC 700720)).